The sequence spans 289 residues: Protease HtpX homolog (289 aa).

The next 2 membrane-spanning stretches (helical) occupy residues 3–23 and 28–48; these read IVGTILFAFYSVAIAAAWFFF and TILAIAIVGSVVLVGVQYKVG. A Zn(2+)-binding site is contributed by His-129. Residue Glu-130 is part of the active site. Residue His-133 participates in Zn(2+) binding. 2 helical membrane-spanning segments follow: residues 144–164 and 172–192; these read LGQGIASIVGIVAQYIVLFSG and FLAIVVGNLVQFLVTLFVLAI. Residue Glu-197 coordinates Zn(2+). A disordered region spans residues 222–250; it reads SQGNEQAAQQQRQRTSRGRGRRQRGQRND. Basic residues predominate over residues 235–246; the sequence is RTSRGRGRRQRG.

Belongs to the peptidase M48B family. It depends on Zn(2+) as a cofactor.

It is found in the cell membrane. This is Protease HtpX homolog from Halobacterium salinarum (strain ATCC 700922 / JCM 11081 / NRC-1) (Halobacterium halobium).